A 2499-amino-acid polypeptide reads, in one-letter code: Probable polyketide synthase 22 (2499 aa).

The 420-residue stretch at 11–430 folds into the Ketosynthase family 3 (KS3) domain; the sequence is DNQVAIVGLG…GSNACVLLSE (420 aa). Catalysis depends on for beta-ketoacyl synthase activity residues Cys177, His316, and His354. The interval 623-656 is acyl/malonyl transferases; the sequence is GITPSIIVGHSLGEVASAFCSGMIDLETACFVIY. Ser633 acts as the For acyl/malonyl transferase activity in catalysis. The N-terminal hotdog fold stretch occupies residues 922–1044; that stretch reads APINQLGNKN…SRILMKSLDV (123 aa). The region spanning 922–1209 is the PKS/mFAS DH domain; the sequence is APINQLGNKN…IASTLSTKSE (288 aa). His956 serves as the catalytic Proton acceptor; for dehydratase activity. The tract at residues 1059–1209 is C-terminal hotdog fold; it reads NWSTLKREQL…IASTLSTKSE (151 aa). Catalysis depends on Asp1121, which acts as the Proton donor; for dehydratase activity. A Carrier domain is found at 2414–2491; sequence EKEFSIRQDI…QIINIVTTKV (78 aa). The residue at position 2451 (Ser2451) is an O-(pantetheine 4'-phosphoryl)serine.

Requires pantetheine 4'-phosphate as cofactor.

Functionally, probable polyketide synthase. The protein is Probable polyketide synthase 22 (pks22) of Dictyostelium discoideum (Social amoeba).